A 75-amino-acid polypeptide reads, in one-letter code: MNQHNSLDSSDITYKTEELLEATTNRYKITVQVANRAKRRKYEDVDIIDDPQVKPVIRAILEMVDEITQPEIISD.

It belongs to the RNA polymerase subunit omega family.

It is found in the plastid. Its subcellular location is the chloroplast. It carries out the reaction RNA(n) + a ribonucleoside 5'-triphosphate = RNA(n+1) + diphosphate. Functionally, may be involved in RNA polymerase activity. In Pyropia yezoensis (Susabi-nori), this protein is Putative DNA-directed RNA polymerase subunit omega.